The chain runs to 481 residues: Glutamyl-tRNA(Gln) amidotransferase subunit A (481 aa).

Residues lysine 76 and serine 151 each act as charge relay system in the active site. The active-site Acyl-ester intermediate is the serine 175.

The protein belongs to the amidase family. GatA subfamily. As to quaternary structure, heterotrimer of A, B and C subunits.

The catalysed reaction is L-glutamyl-tRNA(Gln) + L-glutamine + ATP + H2O = L-glutaminyl-tRNA(Gln) + L-glutamate + ADP + phosphate + H(+). Functionally, allows the formation of correctly charged Gln-tRNA(Gln) through the transamidation of misacylated Glu-tRNA(Gln) in organisms which lack glutaminyl-tRNA synthetase. The reaction takes place in the presence of glutamine and ATP through an activated gamma-phospho-Glu-tRNA(Gln). The sequence is that of Glutamyl-tRNA(Gln) amidotransferase subunit A from Neisseria meningitidis serogroup C / serotype 2a (strain ATCC 700532 / DSM 15464 / FAM18).